The chain runs to 271 residues: Putative phosphoenolpyruvate synthase regulatory protein (271 aa).

151–158 (GVSRSGKT) lines the ADP pocket.

Belongs to the pyruvate, phosphate/water dikinase regulatory protein family. PSRP subfamily.

It carries out the reaction [pyruvate, water dikinase] + ADP = [pyruvate, water dikinase]-phosphate + AMP + H(+). The enzyme catalyses [pyruvate, water dikinase]-phosphate + phosphate + H(+) = [pyruvate, water dikinase] + diphosphate. In terms of biological role, bifunctional serine/threonine kinase and phosphorylase involved in the regulation of the phosphoenolpyruvate synthase (PEPS) by catalyzing its phosphorylation/dephosphorylation. The sequence is that of Putative phosphoenolpyruvate synthase regulatory protein from Paraburkholderia xenovorans (strain LB400).